The chain runs to 331 residues: Lipoyl synthase (331 aa).

Cys-60, Cys-65, Cys-71, Cys-86, Cys-90, Cys-93, and Ser-301 together coordinate [4Fe-4S] cluster. The Radical SAM core domain maps to 72–290 (WSRGTATFML…REEGMQLGFL (219 aa)).

It belongs to the radical SAM superfamily. Lipoyl synthase family. The cofactor is [4Fe-4S] cluster.

It is found in the cytoplasm. It carries out the reaction [[Fe-S] cluster scaffold protein carrying a second [4Fe-4S](2+) cluster] + N(6)-octanoyl-L-lysyl-[protein] + 2 oxidized [2Fe-2S]-[ferredoxin] + 2 S-adenosyl-L-methionine + 4 H(+) = [[Fe-S] cluster scaffold protein] + N(6)-[(R)-dihydrolipoyl]-L-lysyl-[protein] + 4 Fe(3+) + 2 hydrogen sulfide + 2 5'-deoxyadenosine + 2 L-methionine + 2 reduced [2Fe-2S]-[ferredoxin]. It functions in the pathway protein modification; protein lipoylation via endogenous pathway; protein N(6)-(lipoyl)lysine from octanoyl-[acyl-carrier-protein]: step 2/2. Its function is as follows. Catalyzes the radical-mediated insertion of two sulfur atoms into the C-6 and C-8 positions of the octanoyl moiety bound to the lipoyl domains of lipoate-dependent enzymes, thereby converting the octanoylated domains into lipoylated derivatives. This Deinococcus radiodurans (strain ATCC 13939 / DSM 20539 / JCM 16871 / CCUG 27074 / LMG 4051 / NBRC 15346 / NCIMB 9279 / VKM B-1422 / R1) protein is Lipoyl synthase.